We begin with the raw amino-acid sequence, 111 residues long: Large ribosomal subunit protein P2w (111 aa).

Residues 63 to 111 (ASVPSGGGVAVSAAPSSGGGGAAAPAEKKEAKKEEKEESDDDMGFSLFE) form a disordered region. The span at 88-98 (AEKKEAKKEEK) shows a compositional bias: basic and acidic residues. Position 101 is a phosphoserine (Ser101).

Belongs to the eukaryotic ribosomal protein P1/P2 family. As to quaternary structure, P1 and P2 exist as dimers at the large ribosomal subunit.

Plays an important role in the elongation step of protein synthesis. The chain is Large ribosomal subunit protein P2w (RPP2D) from Arabidopsis thaliana (Mouse-ear cress).